A 583-amino-acid chain; its full sequence is MYRTNTCGELRIVNENQEVILCGWVQKSRRMSGIVFVDLRDRYGITQLIFNKKVNLALYNKALELGREWVIQIEGKVVKRFNKNSDIPTGDIEIIVSRLRTLNPSEVPPFTIEENTDGGDDLRMKYRYLDLRRTLIRSNLELRHQMVFAIRNYLNSHEFMEVETPVLINSTPEGARDFIVPSRMNMGEFYSLPQSPQLFKQLLMIAGFDRYFQVVKCFRDEDLRTDRQPEFTQVDCEMSFVEQEDILSIFEGLTKHLFKTIKGLDISGFSRLSYADAIRFYGSDKPDIRFGMQLVEIKDITIGRGFDVFDESEYVGAICAEGCAFYTRKQLDELTDFVKHPQIGAAGLIYVRYSFDGSLKSSVDKFYSTVDLQKWIDRVGAKQGDLVLILYGEKRETQKQLSRLRLEMGSRLGLRDKKQFGCLWVIDFPLFEYDNVLNRFFAKHHPFTSPKQEDVCLLETNPEFVRANAFDMVINGIEIGGGSIRIHNYELQKKIFALLGFSESYTQSQFGFFVDAFKYGAPPHGGIALGLDRFVATFAGLDSIRDCIAFPKNNSGRDTMVGAPSIISRERLSELNLIVEGWQ.

E173 contacts L-aspartate. The interval 197 to 200 is aspartate; that stretch reads QLFK. L-aspartate is bound at residue R219. ATP-binding positions include 219–221 and Q228; that span reads RDE. H444 serves as a coordination point for L-aspartate. E478 serves as a coordination point for ATP. R485 provides a ligand contact to L-aspartate. 530–533 contacts ATP; it reads GLDR.

It belongs to the class-II aminoacyl-tRNA synthetase family. Type 1 subfamily. As to quaternary structure, homodimer.

Its subcellular location is the cytoplasm. It carries out the reaction tRNA(Asp) + L-aspartate + ATP = L-aspartyl-tRNA(Asp) + AMP + diphosphate. Its function is as follows. Catalyzes the attachment of L-aspartate to tRNA(Asp) in a two-step reaction: L-aspartate is first activated by ATP to form Asp-AMP and then transferred to the acceptor end of tRNA(Asp). This is Aspartate--tRNA ligase from Azobacteroides pseudotrichonymphae genomovar. CFP2.